The primary structure comprises 272 residues: MVPTIIYSAILALSAFTPSVFAQTRSSGCGKQPSLANGVHNINGREYILKVPDNYDKNKAHHLVFGLHWRGGNMWNIVDGQSIQPWYGLETRAQGSAIFVAPNGKNAGWANYGGEDIAFIDAIIKQVESDLCVDQSSRFATGFSWGGGMSYSLACSRAKQFKAVSVLSGGVISGCDGGNDPIAYLGIHGINDGVLPFQGGVNLAQKFVRNNGCQQSNVGTPQPGSRGSVRTDFKGCSKPVSFIAYDGGHDAAPLGVGSSLAPDATWRFFMAA.

The signal sequence occupies residues 1–22 (MVPTIIYSAILALSAFTPSVFA).

The protein belongs to the faeC family.

The protein resides in the secreted. It carries out the reaction feruloyl-polysaccharide + H2O = ferulate + polysaccharide.. Involved in degradation of plant cell walls. Hydrolyzes the feruloyl-arabinose ester bond in arabinoxylans, and the feruloyl-galactose ester bond in pectin. Active against paranitrophenyl-acetate, methyl ferulate and wheat arabinoxylan. This chain is Probable feruloyl esterase C (faeC), found in Aspergillus fumigatus (strain ATCC MYA-4609 / CBS 101355 / FGSC A1100 / Af293) (Neosartorya fumigata).